The primary structure comprises 209 residues: Large ribosomal subunit protein uL3 (209 aa).

The interval 133 to 152 (THGNSLSHRVPGSIGQNQTP) is disordered. Gln150 bears the N5-methylglutamine mark.

This sequence belongs to the universal ribosomal protein uL3 family. As to quaternary structure, part of the 50S ribosomal subunit. Forms a cluster with proteins L14 and L19. Post-translationally, methylated by PrmB.

One of the primary rRNA binding proteins, it binds directly near the 3'-end of the 23S rRNA, where it nucleates assembly of the 50S subunit. In Shigella sonnei (strain Ss046), this protein is Large ribosomal subunit protein uL3.